The chain runs to 568 residues: Protein phosphatase 1 regulatory inhibitor subunit 16B (568 aa).

Residues 15 to 55 (EKVPTLERLRAAQKRRAQQLKKWAQYEQDLLHRKRKHERKR) are a coiled coil. Ser-69 is modified (phosphoserine). 4 ANK repeats span residues 100–129 (DGLTALHQCCIDNFEEIVKLLLSHGANVNA), 133–162 (ELWTPLHAAATCGHINLVKILVQYGADLLA), 228–257 (QGATLLHIAGANGYLRAAELLLDHGVRVDV), and 261–290 (DGWEPLHAAAFWGQMPMAELLVSHGASLSA). A phosphoserine mark is found at Ser-333, Ser-337, and Ser-350. The segment at 373-403 (SAAEDQRTSTYNGDIRETRTDQENKDPNPRL) is disordered. The span at 386–403 (DIRETRTDQENKDPNPRL) shows a compositional bias: basic and acidic residues. Ser-477 is subject to Phosphoserine. Positions 505-517 (SSVARSGESSSEG) are enriched in low complexity. The interval 505–527 (SSVARSGESSSEGKAPLIGGRTS) is disordered. Residues 531 to 560 (SNGTSVYYTVTSGDPPLLKFKAPMEEMEEK) form an ANK 5 repeat. Cys-564 is lipidated: S-palmitoyl cysteine. At Cys-565 the chain carries Cysteine methyl ester. A lipid anchor (S-farnesyl cysteine) is attached at Cys-565. The propeptide at 566–568 (RIS) is removed in mature form.

As to quaternary structure, interacts with PPP1CA, PPP1CB and MSN. Interacts (via its fourth ankyrin repeat) with the mature dimeric form of RPSA/LAMR1. Interacts with EEF1A1. Interacts with PTEN. Interacts with ECE1. Phosphorylated by PKA and, after PKA priming, by GSK3B. Phosphorylation by GSK3B reduces its association with PP1C and enhances PP1C activity. Dephosphorylation by its associated PP1C results in enhanced association with PP1C, but reduced PP1C activity.

Its subcellular location is the cell membrane. The protein resides in the nucleus. It localises to the cell projection. Functionally, regulator of protein phosphatase 1 (PP1) that acts as a positive regulator of pulmonary endothelial cell (EC) barrier function. Protects the endothelial barrier from lipopolysaccharide (LPS)-induced vascular leakage. Involved in the regulation of the PI3K/AKT signaling pathway. Involved in the regulation of angiogenesis and endothelial cell proliferation through the control of ECE1 dephosphorylation, trafficking and activity. Involved in the regulation of endothelial cell filopodia extension. May be a downstream target for TGF-beta1 signaling cascade in endothelial cells. Involved in PKA-mediated moesin dephosphorylation which is important in EC barrier protection against thrombin stimulation. Promotes the interaction of PPP1CA with RPSA/LAMR1 and in turn facilitates the dephosphorylation of RPSA/LAMR1. Involved in the dephosphorylation of EEF1A1. This Mus musculus (Mouse) protein is Protein phosphatase 1 regulatory inhibitor subunit 16B (Ppp1r16b).